The following is a 54-amino-acid chain: Protein Vpw (54 aa).

This Bos taurus (Bovine) protein is Protein Vpw (vpw).